Reading from the N-terminus, the 398-residue chain is Protein ELC (398 aa).

In terms of domain architecture, UEV spans 18–162; that stretch reads ALSQRGPSSV…ARDPPLYSRR (145 aa). Residues 157 to 202 form a disordered region; the sequence is PLYSRRRPQPPPPSPPTVYDSSLSRPPSADQSLPRPFPPSPYGGGV. Over residues 175-187 the composition is skewed to polar residues; sequence YDSSLSRPPSADQ. A coiled-coil region spans residues 247–291; that stretch reads EAEAEELLSLQAGLKRREDELNIGLKEMVEEKETLEQQLQIISMN. The 69-residue stretch at 322 to 390 folds into the SB domain; sequence DTLSKQMLEC…RAAQMEVQVA (69 aa).

It belongs to the ubiquitin-conjugating enzyme family. UEV subfamily. In terms of assembly, component of the endosomal sorting required for transport complex I (ESCRT-I), composed of ELC, VPS28 and VPS37. Interacts with VPS28 and VPS37. Binds ubiquitin in vitro. Interacts with FREE1. Interacts with TOL9/TOM1D. Interacts with BRO1/ALIX. Interacts with SINAT1, SINAT2, SINAT3 and SINAT4. Post-translationally, ubiquitinated by SINAT1, SINAT2, SINAT3 and SINAT4 for subsequent proteasomal degradation. In terms of tissue distribution, expressed in roots, stems, leaves and flowers.

It is found in the early endosome. It localises to the late endosome. The protein resides in the prevacuolar compartment. In terms of biological role, component of the ESCRT-I complex (endosomal sorting complex required for transport I), a regulator of vesicular trafficking process. Required for the sorting of endocytic ubiquitinated cargos into multivesicular bodies (MVBs). May control nuclear division through the microtubule cytoskeleton. This is Protein ELC from Arabidopsis thaliana (Mouse-ear cress).